Here is a 123-residue protein sequence, read N- to C-terminus: Large ribosomal subunit protein uL14c (123 aa).

This sequence belongs to the universal ribosomal protein uL14 family. As to quaternary structure, part of the 50S ribosomal subunit.

It localises to the plastid. The protein resides in the chloroplast. Its function is as follows. Binds to 23S rRNA. This chain is Large ribosomal subunit protein uL14c, found in Lolium perenne (Perennial ryegrass).